The sequence spans 91 residues: Small ribosomal subunit protein bS18 (91 aa).

The protein belongs to the bacterial ribosomal protein bS18 family. Part of the 30S ribosomal subunit. Forms a tight heterodimer with protein bS6.

Functionally, binds as a heterodimer with protein bS6 to the central domain of the 16S rRNA, where it helps stabilize the platform of the 30S subunit. The polypeptide is Small ribosomal subunit protein bS18 (Paraburkholderia phymatum (strain DSM 17167 / CIP 108236 / LMG 21445 / STM815) (Burkholderia phymatum)).